The sequence spans 287 residues: Nucleotide-binding protein TGRD_433 (287 aa).

An ATP-binding site is contributed by 9–16 (GMSGAGKS). Residue 60 to 63 (DSRA) participates in GTP binding.

This sequence belongs to the RapZ-like family.

Displays ATPase and GTPase activities. This Endomicrobium trichonymphae protein is Nucleotide-binding protein TGRD_433.